Reading from the N-terminus, the 371-residue chain is RT1 class I histocompatibility antigen, AA alpha chain (371 aa).

The N-terminal stretch at 1 to 24 (MEAMAPRTLLLLLAAALAPTQTRA) is a signal peptide. Residues 25 to 114 (GSHSLRYFYT…LRGYYNQSEG (90 aa)) are alpha-1. Residues 25-311 (GSHSLRYFYT…PSTDSNMETT (287 aa)) are Extracellular-facing. N-linked (GlcNAc...) asparagine glycosylation occurs at asparagine 110. Residues 115-206 (GSHTIQEMYG…ELGKETLLRS (92 aa)) are alpha-2. The segment at 207–298 (DPPEAHVTLH…GLPKPLSQRW (92 aa)) is alpha-3. The region spanning 209–295 (PEAHVTLHPR…EHEGLPKPLS (87 aa)) is the Ig-like C1-type domain. Asparagine 280 carries an N-linked (GlcNAc...) asparagine glycan. A connecting peptide region spans residues 299–311 (EPSPSTDSNMETT). Residues 312 to 336 (VIYVILGAVAMIGAVAIIGAMVAVV) form a helical membrane-spanning segment. Topologically, residues 337 to 371 (RRRKRNTGGKGGDYAPAPGRDSSQSSDVSLPDCKA) are cytoplasmic. The disordered stretch occupies residues 342–371 (NTGGKGGDYAPAPGRDSSQSSDVSLPDCKA). 2 positions are modified to phosphoserine: serine 362 and serine 365.

This sequence belongs to the MHC class I family. Heterodimer of an alpha chain and a beta chain (beta-2-microglobulin).

It is found in the membrane. Its function is as follows. Involved in the presentation of foreign antigens to the immune system. This Rattus norvegicus (Rat) protein is RT1 class I histocompatibility antigen, AA alpha chain.